Consider the following 1486-residue polypeptide: Glutamate synthase [NADPH] large chain (1486 aa).

The propeptide occupies 1–11 (MLYDKSLERDN). Cysteine 12 acts as the Nucleophile in catalysis. A Glutamine amidotransferase type-2 domain is found at 12 to 402 (CGFGLIAHIE…PGELMVIDTR (391 aa)). 1049 to 1101 (LVETQQALVANGLRHKIRLQVDGGLKTGVDIIKAAILGAESFGFGTGPMVALG) provides a ligand contact to FMN. Residues cysteine 1102, cysteine 1108, and cysteine 1113 each contribute to the [3Fe-4S] cluster site.

This sequence belongs to the glutamate synthase family. Aggregate of 4 catalytic active heterodimers, consisting of a large and a small subunit. The cofactor is [3Fe-4S] cluster. Requires FAD as cofactor. It depends on FMN as a cofactor.

The enzyme catalyses 2 L-glutamate + NADP(+) = L-glutamine + 2-oxoglutarate + NADPH + H(+). Its pathway is amino-acid biosynthesis; L-glutamate biosynthesis via GLT pathway; L-glutamate from 2-oxoglutarate and L-glutamine (NADP(+) route): step 1/1. It participates in energy metabolism; nitrogen metabolism. Catalyzes the conversion of L-glutamine and 2-oxoglutarate into two molecules of L-glutamate. This chain is Glutamate synthase [NADPH] large chain (gltB), found in Escherichia coli (strain K12).